The sequence spans 275 residues: Translation initiation factor 2 subunit alpha (275 aa).

The 72-residue stretch at 12–83 (GEFVVATVKR…RKGHIDLSLR (72 aa)) folds into the S1 motif domain.

It belongs to the eIF-2-alpha family. In terms of assembly, heterotrimer composed of an alpha, a beta and a gamma chain.

EIF-2 functions in the early steps of protein synthesis by forming a ternary complex with GTP and initiator tRNA. This Pyrococcus abyssi (strain GE5 / Orsay) protein is Translation initiation factor 2 subunit alpha (eif2a).